A 248-amino-acid chain; its full sequence is Mannose-binding protein C (248 aa).

The N-terminal stretch at 1–20 (MSLIPSLSLLLMSMVAASYS) is a signal peptide. The 58-residue stretch at 42–99 (GINGFPGKDGRDGTKGEKGEPGQGLRGLQGPPGKLGPPGNPGPSGSPGPKGQKGDPGN) folds into the Collagen-like domain. A disordered region spans residues 43–110 (INGFPGKDGR…PDCDSSLAVS (68 aa)). 4-hydroxyproline is present on P47. Residues 49–61 (KDGRDGTKGEKGE) show a composition bias toward basic and acidic residues. 4-hydroxyproline occurs at positions 73, 79, 82, and 88. A compositionally biased stretch (pro residues) spans 75–87 (KLGPPGNPGPSGS). Residues 112-130 (RKALQTEMARIKKWLTFSL) are a coiled coil. A C-type lectin domain is found at 134 to 245 (VGNKFFLTNG…CSSSHLAVCE (112 aa)). Disulfide bonds link C155–C244 and C222–C236.

In terms of assembly, oligomeric complex of 3 or more homotrimers. Interacts with MASP1 and MASP2. Interacts with MEP1A and MEP1B and may inhibit their catalytic activity. Hydroxylation on proline residues within the sequence motif, GXPG, is most likely to be 4-hydroxy as this fits the requirement for 4-hydroxylation in vertebrates.

The protein resides in the secreted. In terms of biological role, calcium-dependent lectin involved in innate immune defense. Binds mannose, fucose and N-acetylglucosamine on different microorganisms and activates the lectin complement pathway. Binds to late apoptotic cells, as well as to apoptotic blebs and to necrotic cells, but not to early apoptotic cells, facilitating their uptake by macrophages. This chain is Mannose-binding protein C (MBL2), found in Nomascus concolor (Black crested gibbon).